The sequence spans 95 residues: UPF0473 protein CD630_12860 (95 aa).

It belongs to the UPF0473 family.

The sequence is that of UPF0473 protein CD630_12860 from Clostridioides difficile (strain 630) (Peptoclostridium difficile).